We begin with the raw amino-acid sequence, 134 residues long: Interleukin-5 (134 aa).

Residues 1-19 form the signal peptide; that stretch reads MRMLLHLSLLALGAAYVSA. N-linked (GlcNAc...) asparagine glycosylation is found at Asn-76 and Asn-90.

Belongs to the IL-5 family. In terms of assembly, homodimer; disulfide-linked. Interacts with IL5RA. Interacts with CSF2RB.

The protein resides in the secreted. Functionally, homodimeric cytokine expressed predominantly by T-lymphocytes and NK cells that plays an important role in the survival, differentiation, and chemotaxis of eosinophils. Also acts on activated and resting B-cells to induce immunoglobulin production, growth, and differentiation. Mechanistically, exerts its biological effects through a receptor composed of IL5RA subunit and the cytokine receptor common subunit beta/CSF2RB. Binding to the receptor leads to activation of various kinases including LYN, SYK and JAK2 and thereby propagates signals through the RAS-MAPK and JAK-STAT5 pathways respectively. This chain is Interleukin-5 (IL5), found in Felis catus (Cat).